A 477-amino-acid polypeptide reads, in one-letter code: tRNA-2-methylthio-N(6)-dimethylallyladenosine synthase (477 aa).

In terms of domain architecture, MTTase N-terminal spans 9–129 (RKLHIKSYGC…LPQLLARAKT (121 aa)). Cys-18, Cys-54, Cys-92, Cys-170, Cys-174, and Cys-177 together coordinate [4Fe-4S] cluster. The region spanning 156–386 (RSRGISAFVT…QLQNLIDSQQ (231 aa)) is the Radical SAM core domain. The TRAM domain maps to 391 to 453 (RTALGRTIDV…RYSLFGTLAS (63 aa)). Residues 454 to 477 (KPTSGEPSNHAATGGAQFQTTAGA) form a disordered region. Low complexity predominate over residues 464 to 477 (AATGGAQFQTTAGA).

It belongs to the methylthiotransferase family. MiaB subfamily. Monomer. Requires [4Fe-4S] cluster as cofactor.

The protein localises to the cytoplasm. The catalysed reaction is N(6)-dimethylallyladenosine(37) in tRNA + (sulfur carrier)-SH + AH2 + 2 S-adenosyl-L-methionine = 2-methylsulfanyl-N(6)-dimethylallyladenosine(37) in tRNA + (sulfur carrier)-H + 5'-deoxyadenosine + L-methionine + A + S-adenosyl-L-homocysteine + 2 H(+). Functionally, catalyzes the methylthiolation of N6-(dimethylallyl)adenosine (i(6)A), leading to the formation of 2-methylthio-N6-(dimethylallyl)adenosine (ms(2)i(6)A) at position 37 in tRNAs that read codons beginning with uridine. The polypeptide is tRNA-2-methylthio-N(6)-dimethylallyladenosine synthase (Nitrobacter winogradskyi (strain ATCC 25391 / DSM 10237 / CIP 104748 / NCIMB 11846 / Nb-255)).